The chain runs to 354 residues: Transcriptional regulator URE2 (354 aa).

Met-2 is subject to N-acetylmethionine. Residues 2–89 (MNNNGNQVSN…TLEQHRQQQQ (88 aa)) form a prion domain (PrD) region. Polar residues predominate over residues 22-42 (GNRNSNTTTDQSNINFEFSTG). Positions 22-76 (GNRNSNTTTDQSNINFEFSTGVNNNNNNNSSSNNNNVQNNNSGRNGSQNNDNENN) are disordered. Residues 43–73 (VNNNNNNNSSSNNNNVQNNNSGRNGSQNNDN) show a composition bias toward low complexity. Residues 112–196 (EGYTLFSHRS…HLVNKYYKET (85 aa)) enclose the GST N-terminal domain. Glutathione is bound by residues Asn-124, His-151, 164-165 (RV), and 180-181 (ES). One can recognise a GST C-terminal domain in the interval 205–354 (DLADQSQINA…PAVIKALRGE (150 aa)).

Belongs to the GST superfamily. In terms of assembly, homodimer. Interacts with NNK1.

It is found in the cytoplasm. The catalysed reaction is 2 glutathione + H2O2 = glutathione disulfide + 2 H2O. Its function is as follows. Plays an important role in nitrogen catabolite repression. Down-regulates the expression of many genes involved in nitrogen utilization by inhibiting the GATA transcriptional activators GLN3 and GAT1. Under good nitrogen conditions, binds to the phosphorylated forms of GLN3 and GAT1 and sequesters them in the cytoplasm, preventing transcription of genes expressed upon nitrogen limitation. Is also an atypical glutaredoxin without a catalytical cysteine residue. Has glutathione peroxidase and thiol:disulfide oxidoreductase activities in both native and fibrillar form. Also shows insulin disulfide reductase and dehydroascorbic acid reductase (DHAR) activities. This is Transcriptional regulator URE2 (URE2) from Saccharomyces cerevisiae (strain ATCC 204508 / S288c) (Baker's yeast).